The following is a 173-amino-acid chain: NADH-ubiquinone oxidoreductase chain 6 (173 aa).

The next 5 membrane-spanning stretches (helical) occupy residues 1-21 (MTYFMFLLLMALVVGLVAVAS), 25-45 (PYFAALGLVVAAGVGCGVLVG), 53-73 (LVLFLIYLGGMLVVFAYSAAL), 87-107 (VLGYVLVYLLGVGLVAGFFWG), and 141-161 (GGMLVICAWVLLLTLLVVLEL).

Belongs to the complex I subunit 6 family.

The protein localises to the mitochondrion membrane. It catalyses the reaction a ubiquinone + NADH + 5 H(+)(in) = a ubiquinol + NAD(+) + 4 H(+)(out). In terms of biological role, core subunit of the mitochondrial membrane respiratory chain NADH dehydrogenase (Complex I) that is believed to belong to the minimal assembly required for catalysis. Complex I functions in the transfer of electrons from NADH to the respiratory chain. The immediate electron acceptor for the enzyme is believed to be ubiquinone. The polypeptide is NADH-ubiquinone oxidoreductase chain 6 (MT-ND6) (Carassius auratus (Goldfish)).